The chain runs to 489 residues: 5-hydroxytryptamine receptor 3A (489 aa).

The N-terminal stretch at 1 to 23 is a signal peptide; the sequence is MRLCIPQVLLALFLSMLTAPGEG. Over 24-246 the chain is Extracellular; sequence SRRRATQARD…MKFYVIIRRR (223 aa). Residues Asn-109, Asn-175, and Asn-191 are each glycosylated (N-linked (GlcNAc...) asparagine). A disulfide bridge links Cys-162 with Cys-176. The chain crosses the membrane as a helical span at residues 247-273; that stretch reads PLFYAVSLLLPSIFLMVVDIVGFCLPP. Topologically, residues 274-278 are cytoplasmic; it reads DSGER. A helical membrane pass occupies residues 279-297; it reads VSFKITLLLGYSVFLIIVS. Topologically, residues 298–307 are extracellular; that stretch reads DTLPATAIGT. The helical transmembrane segment at 308–326 threads the bilayer; it reads PLIGVYFVVCMALLVISLA. The Cytoplasmic portion of the chain corresponds to 327–466; that stretch reads ETIFIVRLVH…GYVLDRLLFR (140 aa). The interval 425–461 is HA-stretch; determines single-channel conductance in 5-HT3 receptors; it reads AVRGLLQELSSIRHFLEKRDEMREVARDWLRVGYVLD. Residues 467–486 traverse the membrane as a helical segment; the sequence is IYLLAVLAYSITLVTLWSIW. Residues 487–489 are Extracellular-facing; sequence HYS.

It belongs to the ligand-gated ion channel (TC 1.A.9) family. 5-hydroxytryptamine receptor (TC 1.A.9.2) subfamily. HTR3A sub-subfamily. As to quaternary structure, forms homopentameric as well as heteropentameric serotonin-activated cation-selective channel complexes with HTR3B or HTR3C or HTR3D or HTR3E. The homomeric complex is functional but exhibits low conductance with modified voltage dependence, and decreased agonist and antagonist affinity. Heteropentameric complexes display properties which resemble that of neuronal serotonin-activated channels in vivo. Interacts with RIC3. As to expression, brain, spinal cord, and heart.

The protein resides in the postsynaptic cell membrane. It is found in the cell membrane. The enzyme catalyses Na(+)(in) = Na(+)(out). It carries out the reaction K(+)(in) = K(+)(out). The catalysed reaction is Ca(2+)(in) = Ca(2+)(out). It catalyses the reaction Mg(2+)(in) = Mg(2+)(out). Forms serotonin (5-hydroxytryptamine/5-HT3)-activated cation-selective channel complexes, which when activated cause fast, depolarizing responses in neurons. The polypeptide is 5-hydroxytryptamine receptor 3A (Mus musculus (Mouse)).